The sequence spans 275 residues: Polyamine aminopropyltransferase (275 aa).

The PABS domain maps to 2–235 (EFWFTEKQTE…GMWTFTIGSK (234 aa)). Residue Gln31 participates in S-methyl-5'-thioadenosine binding. Spermidine-binding residues include His62 and Asp86. S-methyl-5'-thioadenosine is bound by residues Asp106 and 137-138 (DG). Residue Asp155 is the Proton acceptor of the active site. 155-158 (DSTE) contributes to the spermidine binding site. An S-methyl-5'-thioadenosine-binding site is contributed by Pro162.

Belongs to the spermidine/spermine synthase family. Homodimer or homotetramer.

It is found in the cytoplasm. The enzyme catalyses S-adenosyl 3-(methylsulfanyl)propylamine + putrescine = S-methyl-5'-thioadenosine + spermidine + H(+). It participates in amine and polyamine biosynthesis; spermidine biosynthesis; spermidine from putrescine: step 1/1. Its function is as follows. Catalyzes the irreversible transfer of a propylamine group from the amino donor S-adenosylmethioninamine (decarboxy-AdoMet) to putrescine (1,4-diaminobutane) to yield spermidine. The protein is Polyamine aminopropyltransferase of Shouchella clausii (strain KSM-K16) (Alkalihalobacillus clausii).